A 225-amino-acid polypeptide reads, in one-letter code: MFKHEKQLLNGMQVKVERENPQYAVLMQEQLGGANGELKAAMQYLSQSFRVKDQALKDLFLDIGTEELSHMEIVAETINLLNGHSVNYEVVGVGEVESHVLSGLTPFLVNSSGEPWTANYVSVTGDIVADLLSNIASEQRAKVVYEYLYRQINDKEVRRTIDFLLNREEAHNALFREALNKVKNEGSNKDFGVTEDSKLYFDLSTPGRYVQDPNPTEPSFSNPRR.

Glu-37 lines the Mn(2+) pocket. Residues Asp-58 and Asp-62 each coordinate Ca(2+). The Mn(2+) site is built by Glu-67, His-70, Glu-138, and His-171. A Ca(2+)-binding site is contributed by Ser-204. The interval 204–225 is disordered; sequence STPGRYVQDPNPTEPSFSNPRR. Residues 213–225 show a composition bias toward polar residues; it reads PNPTEPSFSNPRR.

This sequence belongs to the manganese catalase family. The cofactor is Ca(2+). Mn(2+) serves as cofactor.

The enzyme catalyses 2 H2O2 = O2 + 2 H2O. In terms of biological role, catalyzes the decomposition of hydrogen peroxide into water and oxygen. In Clostridium acetobutylicum (strain ATCC 824 / DSM 792 / JCM 1419 / IAM 19013 / LMG 5710 / NBRC 13948 / NRRL B-527 / VKM B-1787 / 2291 / W), this protein is Probable manganese catalase.